The primary structure comprises 922 residues: Non-centrosomal microtubule array protein 1 (922 aa).

Residues 1 to 10 (MSNERVSTGS) are compositionally biased toward polar residues. Disordered regions lie at residues 1 to 134 (MSNE…HLPP), 250 to 277 (PVRL…TVPR), 465 to 491 (KSRH…QMNL), and 533 to 563 (TQKE…SNLS). Basic and acidic residues-rich tracts occupy residues 43–54 (SMERKDMPDRPK) and 70–94 (PKDR…KECA). A compositionally biased stretch (low complexity) spans 99 to 113 (SNTSSEHSSRSNSST). Basic and acidic residues-rich tracts occupy residues 256–276 (RGDT…DTVP) and 468–484 (HLSE…ERRG). The span at 539-563 (SHSTPSQSRHSSSKSSHFNGSSNLS) shows a compositional bias: low complexity. A coiled-coil region spans residues 564 to 728 (TSEQLRLQEM…RSVSTLRLEQ (165 aa)).

The protein resides in the cytoplasm. The protein localises to the cytoskeleton. It localises to the apical cell membrane. Its subcellular location is the cell junction. It is found in the hemidesmosome. The protein resides in the adherens junction. Plays a role in the assembly of microtubule arrays in the germline acting redundantly with ptrn-1 to control circumferential microtubule assembly along the body which is necessary for larval development, viability, and morphology and integrity of the epidermis. Required for microtubule stability and anchorage by binding to microtubule minus ends. Recruited to hemidesomosomes in early embryonic elongation to direct the nucleation and growth of non-centrosomal microtubules. Functionally, required for normal nuclear migration in the embryonic epidermis. In terms of biological role, directs the assembly of non-centrosomal microtubule arrays that determine the position of nuclei within intracellular compartments in the epidermis and this is independent of ptrn-1 activity. The protein is Non-centrosomal microtubule array protein 1 of Caenorhabditis elegans.